We begin with the raw amino-acid sequence, 244 residues long: Mitochondrial inner membrane protease atp23 (244 aa).

A disordered region spans residues 1–25 (MSSSEGNKPPLVPDSTKESEPQFDP). His-144 lines the a divalent metal cation pocket. The active site involves Glu-145. His-148 provides a ligand contact to a divalent metal cation.

It belongs to the peptidase M76 family.

The protein localises to the mitochondrion inner membrane. In terms of biological role, has a dual role in the assembly of mitochondrial ATPase. Acts as a protease that removes N-terminal residues of mitochondrial ATPase CF(0) subunit 6 at the intermembrane space side. Also involved in the correct assembly of the membrane-embedded ATPase CF(0) particle, probably mediating association of subunit 6 with the subunit 9 ring. The sequence is that of Mitochondrial inner membrane protease atp23 (atp23) from Botryotinia fuckeliana (strain B05.10) (Noble rot fungus).